Consider the following 226-residue polypeptide: Lipoprotein signal peptidase (226 aa).

Helical transmembrane passes span 12 to 32 (KVVA…KIWV), 69 to 89 (FLSL…AKLV), and 103 to 123 (SLII…GVIF). Active-site residues include aspartate 150 and aspartate 184. The chain crosses the membrane as a helical span at residues 173–193 (FVFFHPVFNFADSCISIGLIL).

It belongs to the peptidase A8 family.

Its subcellular location is the cell inner membrane. It catalyses the reaction Release of signal peptides from bacterial membrane prolipoproteins. Hydrolyzes -Xaa-Yaa-Zaa-|-(S,diacylglyceryl)Cys-, in which Xaa is hydrophobic (preferably Leu), and Yaa (Ala or Ser) and Zaa (Gly or Ala) have small, neutral side chains.. It functions in the pathway protein modification; lipoprotein biosynthesis (signal peptide cleavage). Functionally, this protein specifically catalyzes the removal of signal peptides from prolipoproteins. The sequence is that of Lipoprotein signal peptidase from Porphyromonas gingivalis (strain ATCC 33277 / DSM 20709 / CIP 103683 / JCM 12257 / NCTC 11834 / 2561).